The primary structure comprises 788 residues: Probable potassium transporter 9 (788 aa).

The Cytoplasmic portion of the chain corresponds to 1 to 21 (MDPEFGRGMAPRKREPWRTTL). Residues 22–42 (LLAYQSLGVVYGDLSISPLYV) form a helical membrane-spanning segment. Over 43–59 (YKSTFAEDITHSESNEE) the chain is Extracellular. The helical transmembrane segment at 60–80 (IFGVLSFVFWTLTLIPLIKYV) threads the bilayer. At 81-151 (SIVLRADDNG…EKHKTLQTAL (71 aa)) the chain is on the cytoplasmic side. Residues 152-172 (LIMVMIGTCMVIGDGVLTPAI) traverse the membrane as a helical segment. Topologically, residues 173–191 (SVFSAVSGLELSLSRDQHE) are extracellular. A helical transmembrane segment spans residues 192 to 212 (YAVIPITCVILVFLFALQHYG). Residues 213 to 215 (THR) are Cytoplasmic-facing. Residues 216 to 236 (VGFLFAPIVLAWLICMSMLGL) form a helical membrane-spanning segment. The Extracellular portion of the chain corresponds to 237–264 (YNIIHWNPQVYRALNPYYMLKFLRKTKK). A helical transmembrane segment spans residues 265 to 285 (SGWMSLGGILLCMTGSEAMFA). Residues 286-292 (DLGHFSY) lie on the Cytoplasmic side of the membrane. A helical transmembrane segment spans residues 293 to 313 (SAIQLAFTTLVYPALILGYMG). The Extracellular portion of the chain corresponds to 314-343 (QAAYLSKHHTLNSTYQIGYYISVPESVRWP). N-linked (GlcNAc...) asparagine glycosylation occurs at Asn325. Residues 344-364 (VLVLAILASVVGSQAIISGTF) traverse the membrane as a helical segment. Over 365 to 391 (SIINQSQSLSCFPRVKVVHTSENIHGQ) the chain is Cytoplasmic. The helical transmembrane segment at 392 to 412 (IYIPEINWLLMVLCIAVTVGF) threads the bilayer. Topologically, residues 413-422 (RDTKHMGNAS) are extracellular. A glycan (N-linked (GlcNAc...) asparagine) is linked at Asn420. The helical transmembrane segment at 423–443 (GLAVITVMLVTTCLTSLVIML) threads the bilayer. Topologically, residues 444-451 (CWHRSPAL) are cytoplasmic. A helical membrane pass occupies residues 452–472 (ALVFFLFFGSIEVLYFSASLI). Topologically, residues 473–476 (KFRE) are extracellular. Residues 477-497 (GAWLPIMLALILMAVMFIWHH) form a helical membrane-spanning segment. Over 498–788 (TTIKKYEFDL…LLEVGMVYVL (291 aa)) the chain is Cytoplasmic.

Belongs to the HAK/KUP transporter (TC 2.A.72.3) family.

Its subcellular location is the membrane. In terms of biological role, high-affinity potassium transporter. The protein is Probable potassium transporter 9 (HAK9) of Oryza sativa subsp. japonica (Rice).